Consider the following 423-residue polypeptide: Serine--tRNA ligase (423 aa).

231-233 (TAE) serves as a coordination point for L-serine. Position 262 to 264 (262 to 264 (RSE)) interacts with ATP. E285 contacts L-serine. 349 to 352 (EISS) serves as a coordination point for ATP. S384 lines the L-serine pocket.

The protein belongs to the class-II aminoacyl-tRNA synthetase family. Type-1 seryl-tRNA synthetase subfamily. Homodimer. The tRNA molecule binds across the dimer.

The protein localises to the cytoplasm. The enzyme catalyses tRNA(Ser) + L-serine + ATP = L-seryl-tRNA(Ser) + AMP + diphosphate + H(+). It catalyses the reaction tRNA(Sec) + L-serine + ATP = L-seryl-tRNA(Sec) + AMP + diphosphate + H(+). Its pathway is aminoacyl-tRNA biosynthesis; selenocysteinyl-tRNA(Sec) biosynthesis; L-seryl-tRNA(Sec) from L-serine and tRNA(Sec): step 1/1. Catalyzes the attachment of serine to tRNA(Ser). Is also able to aminoacylate tRNA(Sec) with serine, to form the misacylated tRNA L-seryl-tRNA(Sec), which will be further converted into selenocysteinyl-tRNA(Sec). The polypeptide is Serine--tRNA ligase (Lactococcus lactis subsp. lactis (strain IL1403) (Streptococcus lactis)).